The sequence spans 133 residues: MTTMDNTPQGELVLRTLAMPADTNANGDIFGGWLMSQMDIGGAILAKEIAHGRVVTVRVEGMTFLRPVAVGDVVCCYARCVKRGTTSISINIEVWVKKVASEPIGQRYKATEALFIYVAVDPDGKPRPLPVQG.

One can recognise a HotDog ACOT-type domain in the interval 8 to 123; sequence PQGELVLRTL…LFIYVAVDPD (116 aa).

This sequence belongs to the acyl coenzyme A hydrolase family.

Catalyzes the hydrolysis of the thioester bond in palmitoyl-CoA and malonyl-CoA. The sequence is that of Acyl-CoA thioester hydrolase YciA (yciA) from Salmonella typhi.